A 305-amino-acid chain; its full sequence is Glycerol-3-phosphate dehydrogenase [NAD(P)+] (305 aa).

NADPH-binding residues include phenylalanine 10, arginine 29, and lysine 87. 3 residues coordinate sn-glycerol 3-phosphate: lysine 87, glycine 115, and serine 117. Alanine 119 is a binding site for NADPH. 5 residues coordinate sn-glycerol 3-phosphate: lysine 170, aspartate 223, serine 233, arginine 234, and asparagine 235. Lysine 170 functions as the Proton acceptor in the catalytic mechanism. Arginine 234 contributes to the NADPH binding site. Glutamate 255 contributes to the NADPH binding site.

This sequence belongs to the NAD-dependent glycerol-3-phosphate dehydrogenase family.

The protein localises to the cytoplasm. The catalysed reaction is sn-glycerol 3-phosphate + NAD(+) = dihydroxyacetone phosphate + NADH + H(+). It carries out the reaction sn-glycerol 3-phosphate + NADP(+) = dihydroxyacetone phosphate + NADPH + H(+). It participates in membrane lipid metabolism; glycerophospholipid metabolism. Catalyzes the reduction of the glycolytic intermediate dihydroxyacetone phosphate (DHAP) to sn-glycerol 3-phosphate (G3P), the key precursor for phospholipid synthesis. This Cereibacter sphaeroides (strain ATCC 17023 / DSM 158 / JCM 6121 / CCUG 31486 / LMG 2827 / NBRC 12203 / NCIMB 8253 / ATH 2.4.1.) (Rhodobacter sphaeroides) protein is Glycerol-3-phosphate dehydrogenase [NAD(P)+].